The following is a 960-amino-acid chain: Probable RNA-binding protein 19 (960 aa).

The 78-residue stretch at 2–79 (SRLIVKNLPN…SRITVEFCKS (78 aa)) folds into the RRM 1 domain. Disordered regions lie at residues 85–119 (KPRAWSKHAQKPSQPKQPPKDSTTPEIKKDEKKKK) and 149–294 (WAND…TTCH). Phosphoserine occurs at positions 174, 176, and 180. Residues 176–194 (SGQESEEEGAGEDLEEEAS) are compositionally biased toward acidic residues. Residues 273–286 (RPPEARAETEKPAN) show a composition bias toward basic and acidic residues. RRM domains lie at 294–369 (HTVK…REKN) and 402–480 (GRLF…PSTI). Residue K481 forms a Glycyl lysine isopeptide (Lys-Gly) (interchain with G-Cter in SUMO2) linkage. A disordered region spans residues 491–513 (LGSSSYKKKKEAQDKANSASSHN). The RRM 4 domain maps to 587–659 (TVILVKNLPA…VPLYLEWAPV (73 aa)). A disordered region spans residues 667 to 729 (PQKKKLQDTP…EEEEEESLPG (63 aa)). Acidic residues-rich tracts occupy residues 689-706 (TVPDGETPEDENPTEEGA) and 714-726 (EEEEEEEEEEEES). RRM domains lie at 730 to 811 (CTLF…ISER) and 832 to 912 (SKIL…WADS). Residues S936, S949, and S951 each carry the phosphoserine modification.

Belongs to the RRM MRD1 family. In terms of tissue distribution, expressed in the crypts of Lieberkuhn of the intestine and in intestinal neoplasia (at protein level).

It localises to the nucleus. Its subcellular location is the nucleolus. The protein localises to the nucleoplasm. The protein resides in the cytoplasm. It is found in the chromosome. In terms of biological role, plays a role in embryo pre-implantation development. This is Probable RNA-binding protein 19 (RBM19) from Homo sapiens (Human).